The primary structure comprises 386 residues: Mannitol-1-phosphate 5-dehydrogenase (386 aa).

Ala4–Gly15 is a binding site for NAD(+).

This sequence belongs to the mannitol dehydrogenase family.

The catalysed reaction is D-mannitol 1-phosphate + NAD(+) = beta-D-fructose 6-phosphate + NADH + H(+). The protein is Mannitol-1-phosphate 5-dehydrogenase of Caldanaerobacter subterraneus subsp. tengcongensis (strain DSM 15242 / JCM 11007 / NBRC 100824 / MB4) (Thermoanaerobacter tengcongensis).